A 395-amino-acid polypeptide reads, in one-letter code: MSSFGTLFKVTTYGESHCKSVGCIVEGCPPGMNLTESDVQVQLTRRRPGQSNLTTPRNEKDKVQIQSGTEFGVTLGTPIGMLVLNQDQKPHDYSDMDNYPRPSHADYTYLEKYGVKASSGGGRSSARETIGRVAAGAIAEKYLLEAYGVEIVAFVSSVGKIAIPLHETASSAILDPEDDTFESPITAEYLKFLNKITREEVDKTTVRCPHAATAAKMAERITRARDNHDSIGGTVTCVIRNVPTGLGEPCFDKLEAKLAHAMMSIPATKSFEIGSGREGCKVAGSKHNDLFYRNADTGKLGTLTNNSGGVQGGISNGENVYFTIGFKSPATIGVEQSTSRYDGSDGVLAAKGRHDPCVVPRAIPIVEAMAALVVMDAVMIQQSRIASRNLLPNAQ.

Belongs to the chorismate synthase family. As to quaternary structure, homotetramer. FMNH2 is required as a cofactor.

The catalysed reaction is 5-O-(1-carboxyvinyl)-3-phosphoshikimate = chorismate + phosphate. Its pathway is metabolic intermediate biosynthesis; chorismate biosynthesis; chorismate from D-erythrose 4-phosphate and phosphoenolpyruvate: step 7/7. This Schizosaccharomyces pombe (strain 972 / ATCC 24843) (Fission yeast) protein is Chorismate synthase.